The following is a 562-amino-acid chain: Cytochrome c oxidase subunit 1 (562 aa).

Residues 21–41 (TLYFLVLGFLALIVGSLFGPF) traverse the membrane as a helical segment. Fe(II)-heme a is bound at residue His-72. The next 8 membrane-spanning stretches (helical) occupy residues 74 to 94 (VLNAIVFTQLFAQAIMVYLPA), 105 to 125 (LMWLSWWMAFIGLVVAALPLL), 144 to 164 (AFYLGASVFVLSTWVSIYIVL), 187 to 207 (VVFWLMWFLASLGLVLEAVLF), 227 to 247 (LFWWTGHPIVYFWLLPAYAII), 267 to 287 (LAFLLFLLLSTPVGFHHQFAD), 300 to 320 (VLTLFVAVPSLMTAFTVAASL), and 345 to 365 (AFVAPVLGLLGFIPGGAGGIV). His-233, Tyr-237, His-282, and His-283 together coordinate Cu cation. Residues 233-237 (HPIVY) constitute a cross-link (1'-histidyl-3'-tyrosine (His-Tyr)). Position 384 (His-384) interacts with heme a3. 4 helical membrane passes run 385–405 (FHLQVASLVTLTAMGSLYWLL), 420–440 (LGLAVVWLWFLGMMIMAVGLH), 471–491 (VLAGIVLLVALLLFIYGLFSV), and 527–547 (IGFWFAVAAILVVLAYGPTLV). His-386 provides a ligand contact to Fe(II)-heme a.

It belongs to the heme-copper respiratory oxidase family. The cofactor is heme. Requires Cu cation as cofactor.

It localises to the cell membrane. It catalyses the reaction 4 Fe(II)-[cytochrome c] + O2 + 8 H(+)(in) = 4 Fe(III)-[cytochrome c] + 2 H2O + 4 H(+)(out). The protein operates within energy metabolism; oxidative phosphorylation. The sequence is that of Cytochrome c oxidase subunit 1 (cbaA) from Thermus thermophilus (strain ATCC 27634 / DSM 579 / HB8).